Reading from the N-terminus, the 136-residue chain is Phosphoribosyl-AMP cyclohydrolase (136 aa).

Mg(2+) is bound at residue aspartate 89. Cysteine 90 serves as a coordination point for Zn(2+). Positions 91 and 93 each coordinate Mg(2+). Zn(2+) is bound by residues cysteine 106 and cysteine 113.

This sequence belongs to the PRA-CH family. Homodimer. The cofactor is Mg(2+). Zn(2+) is required as a cofactor.

It localises to the cytoplasm. It catalyses the reaction 1-(5-phospho-beta-D-ribosyl)-5'-AMP + H2O = 1-(5-phospho-beta-D-ribosyl)-5-[(5-phospho-beta-D-ribosylamino)methylideneamino]imidazole-4-carboxamide. Its pathway is amino-acid biosynthesis; L-histidine biosynthesis; L-histidine from 5-phospho-alpha-D-ribose 1-diphosphate: step 3/9. Its function is as follows. Catalyzes the hydrolysis of the adenine ring of phosphoribosyl-AMP. The protein is Phosphoribosyl-AMP cyclohydrolase of Bifidobacterium longum subsp. infantis (strain ATCC 15697 / DSM 20088 / JCM 1222 / NCTC 11817 / S12).